We begin with the raw amino-acid sequence, 873 residues long: Sine oculis-binding protein homolog (873 aa).

Basic and acidic residues predominate over residues 1–14 (MAEMEKEGRPPENK). A disordered region spans residues 1 to 26 (MAEMEKEGRPPENKRSRKPAHPVKRE). 2 consecutive FCS-type zinc fingers follow at residues 142 to 180 (DDVSNVQIMCAWCQKVGIKRYSLSMGSEVKCFCSEKCFA) and 216 to 256 (FKNN…KCLN). Disordered regions lie at residues 307–338 (ARRKAPSPASAAGQIQGPGPSASTTASPSDTA), 413–485 (RGPP…GAPL), 550–608 (KPPS…NQAQ), 742–766 (STEGSKNPEPPQDPKKPQPPEELAV), and 779–811 (SNCHLEGDTGKKAGEEPLAGGDKQDPNLNNPAD). Low complexity predominate over residues 312-338 (PSPASAAGQIQGPGPSASTTASPSDTA). Residues 460-485 (IHPPTTPTMPGNPPGLLPPPPPGAPL) show a composition bias toward pro residues. A compositionally biased stretch (polar residues) spans 554-570 (GFSSNGENFIPSNSSET). Residues 571-603 (PGGKPPNSSSSPRESKQGSSKPSDSSPSCSGQS) are compositionally biased toward low complexity. Residues 783-793 (LEGDTGKKAGE) show a composition bias toward basic and acidic residues.

Belongs to the SOBP family.

Implicated in development of the cochlea. The chain is Sine oculis-binding protein homolog from Gallus gallus (Chicken).